A 437-amino-acid polypeptide reads, in one-letter code: GTPase Der (437 aa).

EngA-type G domains are found at residues 4–167 and 175–352; these read PVVA…AEKD and IRFS…DHQH. Residues 10–17, 57–61, 119–122, 181–188, 229–233, and 294–297 each bind GTP; these read GRPNVGKS, DTGGI, NKVD, DTAGI, and NKWD. The 85-residue stretch at 353 to 437 folds into the KH-like domain; sequence RRIQSAVLND…PIRLIKRRRK (85 aa).

Belongs to the TRAFAC class TrmE-Era-EngA-EngB-Septin-like GTPase superfamily. EngA (Der) GTPase family. In terms of assembly, associates with the 50S ribosomal subunit.

In terms of biological role, GTPase that plays an essential role in the late steps of ribosome biogenesis. This Limosilactobacillus fermentum (strain NBRC 3956 / LMG 18251) (Lactobacillus fermentum) protein is GTPase Der.